We begin with the raw amino-acid sequence, 658 residues long: Endoglin (658 aa).

Residues 1 to 25 (MDRGTLPLAVALLLASCSLSPTSLA) form the signal peptide. Positions 26 to 46 (ETVHCDLQPVGPERGEVTYTT) are OR1, N-terminal part. The tract at residues 26–337 (ETVHCDLQPV…SSCGGRLQTS (312 aa)) is required for interaction with GDF2. Over 26–586 (ETVHCDLQPV…PDLSGCTSKG (561 aa)) the chain is Extracellular. 7 disulfides stabilise this stretch: Cys30–Cys207, Cys53–Cys182, Cys242–Cys330, Cys350–Cys382, Cys363–Cys442, Cys394–Cys412, and Cys493–Cys549. Residues 47 to 199 (SQVSKGCVAQ…MGRTLEWRPR (153 aa)) form an OR2 region. N-linked (GlcNAc...) asparagine glycosylation is found at Asn88, Asn102, Asn121, and Asn134. An OR1, C-terminal part region spans residues 200–330 (TPALVRGCHL…SIVSLHASSC (131 aa)). The interval 270–282 (QIWTTGEYSFKIF) is essential for interaction with GDF2. The N-linked (GlcNAc...) asparagine glycan is linked to Asn307. The region spanning 363–533 (CADDAMTLVL…PEGDPRFSFL (171 aa)) is the ZP domain. A Cell attachment site motif is present at residues 399-401 (RGD). Residues 587–611 (LVLPAVLGITFGAFLIGALLTAALW) traverse the membrane as a helical segment. At 612-658 (YIYSHTRSPSKREPVVAVAAPASSESSSTNHSIGSTQSTPCSTSSMA) the chain is on the cytoplasmic side. Residues 626–639 (VVAVAAPASSESSS) are compositionally biased toward low complexity. The disordered stretch occupies residues 626–658 (VVAVAAPASSESSSTNHSIGSTQSTPCSTSSMA). Over residues 640 to 658 (TNHSIGSTQSTPCSTSSMA) the composition is skewed to polar residues. 2 positions are modified to phosphoserine; by TGFBR1: Ser646 and Ser649.

As to quaternary structure, homodimer; disulfide-linked. Forms a heteromeric complex with the signaling receptors for transforming growth factor-beta: TGFBR1 and/or TGFBR2. It is able to bind TGFB1 and TGFB2 with high affinity, but not TGFB3. Interacts with GDF2, forming a heterotetramer with a 2:2 stoichiometry. Interacts with ACVRL1. Can form a heteromeric complex with GDF2 and ACVRL1. Interacts with BMP10. Interacts with DYNLT4. Interacts with ARRB2. Detected on umbilical veil endothelial cells. Detected in placenta (at protein level). Detected on endothelial cells.

It is found in the cell membrane. Functionally, vascular endothelium glycoprotein that plays an important role in the regulation of angiogenesis. Required for normal structure and integrity of adult vasculature. Regulates the migration of vascular endothelial cells. Required for normal extraembryonic angiogenesis and for embryonic heart development. May regulate endothelial cell shape changes in response to blood flow, which drive vascular remodeling and establishment of normal vascular morphology during angiogenesis. May play a critical role in the binding of endothelial cells to integrins and/or other RGD receptors. Acts as a TGF-beta coreceptor and is involved in the TGF-beta/BMP signaling cascade that ultimately leads to the activation of SMAD transcription factors. Required for GDF2/BMP9 signaling through SMAD1 in endothelial cells and modulates TGFB1 signaling through SMAD3. The polypeptide is Endoglin (ENG) (Homo sapiens (Human)).